The following is a 356-amino-acid chain: Sulfate/thiosulfate import ATP-binding protein CysA (356 aa).

Residues 3 to 237 (IEVKNLVKRF…PKNSFVFHFL (235 aa)) enclose the ABC transporter domain. 35–42 (GPSGSGKT) serves as a coordination point for ATP.

The protein belongs to the ABC transporter superfamily. Sulfate/tungstate importer (TC 3.A.1.6) family. In terms of assembly, the complex is composed of two ATP-binding proteins (CysA), two transmembrane proteins (CysT and CysW) and a solute-binding protein (CysP).

It is found in the cell inner membrane. It carries out the reaction sulfate(out) + ATP + H2O = sulfate(in) + ADP + phosphate + H(+). It catalyses the reaction thiosulfate(out) + ATP + H2O = thiosulfate(in) + ADP + phosphate + H(+). Part of the ABC transporter complex CysAWTP involved in sulfate/thiosulfate import. Responsible for energy coupling to the transport system. In Leptospira interrogans serogroup Icterohaemorrhagiae serovar copenhageni (strain Fiocruz L1-130), this protein is Sulfate/thiosulfate import ATP-binding protein CysA.